A 570-amino-acid chain; its full sequence is MGEKPDKYEILQDLMRRRGFAWGSFEIYGGSRGFYDYGPLGATIKRKIEQKIREAFQREGFFELETPDITPEKVFIASGHVEKFVDPLVECRKCGARFRADHIIEEALGMDVEGLSAEELTKLIREHDIRCPECGGELSDVWYFNLMFETKIGPYGDQKGYLRPETAQGIFVNFKRLNAFARNKLPFGVFQIGKAYRNEISPRQGMLRLREFTQAEAEIFFNPSETEHPHFDEVKNEKLRLYPIEHQLKNLGEIELTAEEAVKKGYIMNTFFAYYMVMVKRVLLDIGIPEDKIRFRQQLPEERAHYSRDTWDAEVHSERFGWVECVGIANRGDYDLSRHMRESGADLTVLIHYDEPKIVKRLEVSLNLKRVGPKLRKDAKRINELIKSWNEEKKRELVEILGKEGKITIEGYELEKDDFIIREVEEKITGEKIVPHVLEPSFGIDRPFYLLLENSLVIEEDRTYLKLKKDMAPIEVAVLPLVAKEPLKSIAYEIFRKLQKAGFIVVYDEKDTIGRRYLRYDEIGTPYCVTIDNQTPEDSTVTIRDRDTREQVRVSIEELPSKLRELIFGE.

Positions 99 and 165 each coordinate substrate. Residues 197 to 199 (RNE), 207 to 212 (LRLREF), 324 to 325 (EC), and 443 to 446 (GIDR) contribute to the ATP site. Residue 212-216 (FTQAE) coordinates substrate. 439–443 (EPSFG) contributes to the substrate binding site.

The protein belongs to the class-II aminoacyl-tRNA synthetase family.

It is found in the cytoplasm. It carries out the reaction tRNA(Gly) + glycine + ATP = glycyl-tRNA(Gly) + AMP + diphosphate. Its function is as follows. Catalyzes the attachment of glycine to tRNA(Gly). The sequence is that of Glycine--tRNA ligase from Thermococcus gammatolerans (strain DSM 15229 / JCM 11827 / EJ3).